A 318-amino-acid chain; its full sequence is Elongator complex protein 5 (318 aa).

Ser270 carries the post-translational modification Phosphoserine.

This sequence belongs to the ELP5 family. In terms of assembly, component of the elongator complex which consists of ELP1, ELP2, ELP3, ELP4, ELP5 and ELP6; in the complex, is required for optimal binding of ELP3 to ELP4. Post-translationally, tyrosine-phosphorylated.

It is found in the nucleus. Its subcellular location is the cytoplasm. Its pathway is tRNA modification; 5-methoxycarbonylmethyl-2-thiouridine-tRNA biosynthesis. Functionally, component of the elongator complex which is required for multiple tRNA modifications, including mcm5U (5-methoxycarbonylmethyl uridine), mcm5s2U (5-methoxycarbonylmethyl-2-thiouridine), and ncm5U (5-carbamoylmethyl uridine). The elongator complex catalyzes the formation of carboxymethyluridine in the wobble base at position 34 in tRNAs. Involved in cell migration. This Rattus norvegicus (Rat) protein is Elongator complex protein 5 (Elp5).